Reading from the N-terminus, the 402-residue chain is Protein lag-2 (402 aa).

The signal sequence occupies residues 1-15 (MIAYFLLLLTCLPVL). Residues 16–279 (QARVEVHQEF…TTTTPTTVEI (264 aa)) are Extracellular-facing. N-linked (GlcNAc...) asparagine glycosylation is found at Asn72 and Asn105. Positions 122-166 (VTCARNYFGNRCENFCDAHLAKAARKRCDAMGRLRCDIGWMGPHC) constitute a DSL domain. Disulfide bonds link Cys124–Cys133, Cys137–Cys149, Cys157–Cys166, Cys175–Cys183, Cys177–Cys204, Cys206–Cys215, Cys233–Cys245, Cys239–Cys254, and Cys256–Cys265. EGF-like domains follow at residues 171-216 (DPRK…TRCE) and 229-266 (RPDA…EFCE). A glycan (N-linked (GlcNAc...) asparagine) is linked at Asn194. Residues 280–306 (TVSTSGYSSAVYITVALFVIFSIIIGC) traverse the membrane as a helical segment. Over 307-402 (FKYKFKPMRQ…PPSIPACHYV (96 aa)) the chain is Cytoplasmic.

In terms of assembly, may interact with lin-12 / Notch receptor. In terms of tissue distribution, expressed in the gonad distal tip cell (DTC) of hermaphrodites.

Its subcellular location is the cell membrane. Functionally, probable ligand for lin-12/Notch and glp-1/Notch receptors and involved in the mediation of Notch signaling. Involved in the lin-12/Notch pathway signaling of cell fate in vulval precursor cells (VPCs) and in the postembryonic mesodermal lineage (M lineage), acting redundantly with dsl-1 and apx-1. Functions in uterine cells to promote basement membrane mobility during tissue remodeling. Required for oocyte growth control, acting redundantly with apx-1, perhaps signaling via the glp-1/Notch pathway. Plays a role in Notch-dependent induction of left-right asymmetry in interneurons and motoneurons. Involved in maintaining the developmentally arrested larval state known as dauer, probably signaling in the glp-1/Notch pathway. Required for normal sleep bout quantity and arousal thresholds during the transition from the last larval stage to adulthood in well-fed animals. This chain is Protein lag-2, found in Caenorhabditis elegans.